An 80-amino-acid chain; its full sequence is Acyl carrier protein (80 aa).

The Carrier domain maps to 4-79 (NSIEEKVRSI…DVVAYIEKVQ (76 aa)). O-(pantetheine 4'-phosphoryl)serine is present on serine 39.

Belongs to the acyl carrier protein (ACP) family. In terms of processing, 4'-phosphopantetheine is transferred from CoA to a specific serine of apo-ACP by AcpS. This modification is essential for activity because fatty acids are bound in thioester linkage to the sulfhydryl of the prosthetic group.

Its subcellular location is the cytoplasm. It participates in lipid metabolism; fatty acid biosynthesis. Carrier of the growing fatty acid chain in fatty acid biosynthesis. The polypeptide is Acyl carrier protein (Akkermansia muciniphila (strain ATCC BAA-835 / DSM 22959 / JCM 33894 / BCRC 81048 / CCUG 64013 / CIP 107961 / Muc)).